The sequence spans 774 residues: Beta-D-xylosidase 1 (774 aa).

An N-terminal signal peptide occupies residues 1 to 30; that stretch reads MSCYNKALLIGNKVVVILVFLLCLVHSSES. Asn-131 is a glycosylation site (N-linked (GlcNAc...) asparagine). The active site involves Asp-296. N-linked (GlcNAc...) asparagine glycosylation is present at Asn-658.

The protein belongs to the glycosyl hydrolase 3 family. As to expression, expressed in leaves, stems, seedlings, roots, inflorescences, siliques and developing seeds. Expressed in the vasculature of the roots, leaves, flowers and silique. Expressed in tissues undergoing secondary cell wall thickening such as protoxylem, metaxylem, intrafascicular cambium and fibers.

It is found in the secreted. The protein localises to the extracellular space. The protein resides in the extracellular matrix. The catalysed reaction is Hydrolysis of terminal non-reducing alpha-L-arabinofuranoside residues in alpha-L-arabinosides.. Its function is as follows. Involved in pectic arabinan modification in mucilage secretory cells. Also acts as a beta-D-xylosidase during the remodeling of xylans in vascular development. The polypeptide is Beta-D-xylosidase 1 (BXL1) (Arabidopsis thaliana (Mouse-ear cress)).